We begin with the raw amino-acid sequence, 1410 residues long: SNF2 domain-containing protein CLASSY 3 (1410 aa).

Basic residues predominate over residues 1–12; the sequence is MECIGKRVKSRS. Disordered stretches follow at residues 1 to 74, 87 to 108, 209 to 330, 344 to 376, 428 to 593, and 632 to 654; these read MECI…SVPN, DLNV…SEQN, GEIE…PIKR, RSGS…QREV, NVSK…LKDK, and EDEA…REDH. A Nuclear localization signal 1 motif is present at residues 22-29; the sequence is RKKMETVA. Residues 95 to 108 show a composition bias toward polar residues; that stretch reads GPSSSRLTDGSEQN. Acidic residues predominate over residues 245–266; it reads SDGEDSSSETDEEEEENQDSED. The stretch at 248-278 forms a coiled coil; it reads EDSSSETDEEEEENQDSEDNNTKDNVTVESL. The segment covering 276–301 has biased composition (low complexity); that stretch reads ESLSSEDPSSSSSSSSSSSSSSSSSS. A compositionally biased stretch (basic and acidic residues) spans 306-323; sequence SYVKEVVGDNRDDDDLRK. A Nuclear localization signal 2 motif is present at residues 328–335; it reads IKRVSLVE. A compositionally biased stretch (basic and acidic residues) spans 351-376; it reads KPRERDNKIQKLNHREEEKKERQREV. Positions 356–377 form a coiled coil; sequence DNKIQKLNHREEEKKERQREVV. A compositionally biased stretch (polar residues) spans 428 to 446; the sequence is NVSKYEDSVSINSGKTTGA. Composition is skewed to basic and acidic residues over residues 450–463 and 488–504; these read PEVE…ELNT and EPSR…KEVQ. Residues 576–587 show a composition bias toward low complexity; the sequence is SSISSGDGYESD. The Helicase ATP-binding domain occupies 850-1060; the sequence is FENSDETGGC…CNVLGLARPK (211 aa). ATP is bound at residue 863–870; that stretch reads HAPGTGKT. The DEAH box motif lies at 1011–1014; it reads DEAH. Positions 1132-1139 match the Nuclear localization signal 3 motif; it reads QRRVLESI. In terms of domain architecture, Helicase C-terminal spans 1206–1359; it reads EFVELCEVIK…ELVFACSSRH (154 aa).

The protein belongs to the SNF2/RAD54 helicase family. In terms of assembly, interacts with NRPD1.

It localises to the nucleus. In terms of biological role, probable chromatin remodeling factor. This Arabidopsis thaliana (Mouse-ear cress) protein is SNF2 domain-containing protein CLASSY 3 (CLSY3).